A 312-amino-acid polypeptide reads, in one-letter code: ADIPOR-like receptor IZH4 (312 aa).

Positions 1 to 38 (MVSLTTIEQSPVKCETTTEKESNDTRGTDSNENAETKE) are disordered. The Cytoplasmic portion of the chain corresponds to 1–64 (MVSLTTIEQS…YKNKSSRNES (64 aa)). Over residues 16–38 (TTTEKESNDTRGTDSNENAETKE) the composition is skewed to basic and acidic residues. The chain crosses the membrane as a helical span at residues 65–85 (LVALIYLLGSMLSFCLLIFFT). The Lumenal segment spans residues 86–101 (DFYLIPLFPTTTTMTD). A helical membrane pass occupies residues 102–122 (YIVFNFYLLNVFVFCMVHFIY). Over 123–141 (HFVKNISLQQHLEHWQKFS) the chain is Cytoplasmic. Residues 142–162 (YLSNINLLISSQITILYYLFY) traverse the membrane as a helical segment. Over 163–165 (DYV) the chain is Lumenal. The chain crosses the membrane as a helical span at residues 166–186 (FFFKIFTLLMNFIGLVAYFFI). Residues 187–201 (LTDKLISSKRFNKTV) are Cytoplasmic-facing. A helical membrane pass occupies residues 202–222 (FFISVSVVCCSLPLLTAIITF). Residues 223 to 231 (DGLENLKER) lie on the Lumenal side of the membrane. A helical membrane pass occupies residues 232 to 252 (IKVNAITWELVALVAASIIYV). At 253–277 (TRFPESLFRRNKKEEGWNHSEYLFH) the chain is on the cytoplasmic side. Residues 278 to 298 (LLISGTAFYHFFILIQSYILM) form a helical membrane-spanning segment. Residues 299–312 (HSSLNQPELINFKS) lie on the Lumenal side of the membrane.

This sequence belongs to the ADIPOR family.

Its subcellular location is the endoplasmic reticulum membrane. In terms of biological role, ADIPOR-like receptor involved in zinc metabolism either by altering membrane sterol content or by directly altering cellular zinc levels. In Saccharomyces cerevisiae (strain ATCC 204508 / S288c) (Baker's yeast), this protein is ADIPOR-like receptor IZH4 (IZH4).